The primary structure comprises 100 residues: Urease subunit gamma (100 aa).

The protein belongs to the urease gamma subunit family. In terms of assembly, heterotrimer of UreA (gamma), UreB (beta) and UreC (alpha) subunits. Three heterotrimers associate to form the active enzyme.

The protein localises to the cytoplasm. The enzyme catalyses urea + 2 H2O + H(+) = hydrogencarbonate + 2 NH4(+). Its pathway is nitrogen metabolism; urea degradation; CO(2) and NH(3) from urea (urease route): step 1/1. The sequence is that of Urease subunit gamma from Citrobacter koseri (strain ATCC BAA-895 / CDC 4225-83 / SGSC4696).